Here is a 313-residue protein sequence, read N- to C-terminus: Olfactory receptor 1G1 (313 aa).

Residues 1-25 (MEGKNLTSISEFFLLGFSEQLEEQK) lie on the Extracellular side of the membrane. A glycan (N-linked (GlcNAc...) asparagine) is linked at Asn-5. A helical transmembrane segment spans residues 26–49 (ALFGSFLFMYLVTVAGNLLIILVI). Residues 50 to 57 (ITDTQLHT) are Cytoplasmic-facing. A helical membrane pass occupies residues 58–79 (PMYFFLANLSLADACFVSTTVP). Residues 80-100 (KMLANIQIQSQAISYSGCLLQ) are Extracellular-facing. An intrachain disulfide couples Cys-97 to Cys-189. A helical transmembrane segment spans residues 101-120 (LYFFMLFVMLEAFLLAVMAY). The Cytoplasmic segment spans residues 121-140 (DRYVAICHPLHYILIMSPGL). Residues 141-158 (CVFLVSASWIMNALHSLL) traverse the membrane as a helical segment. Topologically, residues 159–196 (HTLLMNSLSFCANHEIPHFFCDIDPLLSLSCTDPFTNE) are extracellular. The chain crosses the membrane as a helical span at residues 197 to 219 (LVIFITGGLTGLVCVLCLIISYT). Over 220–236 (NIFSTILKIPSAQGKRK) the chain is Cytoplasmic. Residues 237-259 (AFSTCGSHLSVVSLFFGTSFCVY) form a helical membrane-spanning segment. Topologically, residues 260-272 (FIPPSTRSAQKDT) are extracellular. The helical transmembrane segment at 273–292 (VASVMYTVVTPMLNPFIYSL) threads the bilayer. Topologically, residues 293–313 (RNQEIKSSLRKLIWVREIHSP) are cytoplasmic.

This sequence belongs to the G-protein coupled receptor 1 family.

The protein localises to the cell membrane. In terms of biological role, odorant receptor. The sequence is that of Olfactory receptor 1G1 (OR1G1) from Gorilla gorilla gorilla (Western lowland gorilla).